The following is a 719-amino-acid chain: Probable 1-deoxy-D-xylulose-5-phosphate synthase, chloroplastic (719 aa).

A chloroplast-targeting transit peptide spans 1–57 (MALCAYAFPGILNRTVAVASDASKPTPLFSEWIHGTDLQFQFHQKLTQVKKRSRTVQ). Thiamine diphosphate is bound by residues H145 and 186–188 (GHS). D217 contacts Mg(2+). Thiamine diphosphate is bound by residues 218–219 (GA), N246, Y367, and E449. N246 is a Mg(2+) binding site.

This sequence belongs to the transketolase family. DXPS subfamily. As to quaternary structure, homodimer. Mg(2+) serves as cofactor. The cofactor is thiamine diphosphate.

Its subcellular location is the plastid. The protein resides in the chloroplast. It carries out the reaction D-glyceraldehyde 3-phosphate + pyruvate + H(+) = 1-deoxy-D-xylulose 5-phosphate + CO2. It participates in metabolic intermediate biosynthesis; 1-deoxy-D-xylulose 5-phosphate biosynthesis; 1-deoxy-D-xylulose 5-phosphate from D-glyceraldehyde 3-phosphate and pyruvate: step 1/1. Catalyzes the acyloin condensation reaction between C atoms 2 and 3 of pyruvate and glyceraldehyde 3-phosphate to yield 1-deoxy-D-xylulose-5-phosphate (DXP). The sequence is that of Probable 1-deoxy-D-xylulose-5-phosphate synthase, chloroplastic (TKT2) from Capsicum annuum (Capsicum pepper).